The chain runs to 248 residues: Ubiquinone/menaquinone biosynthesis C-methyltransferase UbiE (248 aa).

S-adenosyl-L-methionine-binding residues include serine 68 and aspartate 92.

It belongs to the class I-like SAM-binding methyltransferase superfamily. MenG/UbiE family.

The enzyme catalyses a 2-demethylmenaquinol + S-adenosyl-L-methionine = a menaquinol + S-adenosyl-L-homocysteine + H(+). It carries out the reaction a 2-methoxy-6-(all-trans-polyprenyl)benzene-1,4-diol + S-adenosyl-L-methionine = a 5-methoxy-2-methyl-3-(all-trans-polyprenyl)benzene-1,4-diol + S-adenosyl-L-homocysteine + H(+). Its pathway is quinol/quinone metabolism; menaquinone biosynthesis; menaquinol from 1,4-dihydroxy-2-naphthoate: step 2/2. It functions in the pathway cofactor biosynthesis; ubiquinone biosynthesis. Functionally, methyltransferase required for the conversion of demethylmenaquinol (DMKH2) to menaquinol (MKH2) and the conversion of 2-polyprenyl-6-methoxy-1,4-benzoquinol (DDMQH2) to 2-polyprenyl-3-methyl-6-methoxy-1,4-benzoquinol (DMQH2). This is Ubiquinone/menaquinone biosynthesis C-methyltransferase UbiE from Rickettsia massiliae (strain Mtu5).